The primary structure comprises 256 residues: Protein FixA (256 aa).

This sequence belongs to the ETF beta-subunit/FixA family. In terms of assembly, heterodimer of FixA and FixB.

It functions in the pathway amine and polyamine metabolism; carnitine metabolism. Functionally, required for anaerobic carnitine reduction. May bring reductant to CaiA. The sequence is that of Protein FixA from Shigella flexneri serotype 5b (strain 8401).